A 538-amino-acid chain; its full sequence is Chaperonin GroEL (538 aa).

Residues 29–32 (TLGP), 86–90 (DGTTT), Gly413, 477–479 (NAA), and Asp493 each bind ATP.

This sequence belongs to the chaperonin (HSP60) family. As to quaternary structure, forms a cylinder of 14 subunits composed of two heptameric rings stacked back-to-back. Interacts with the co-chaperonin GroES.

It localises to the cytoplasm. It carries out the reaction ATP + H2O + a folded polypeptide = ADP + phosphate + an unfolded polypeptide.. Together with its co-chaperonin GroES, plays an essential role in assisting protein folding. The GroEL-GroES system forms a nano-cage that allows encapsulation of the non-native substrate proteins and provides a physical environment optimized to promote and accelerate protein folding. The sequence is that of Chaperonin GroEL from Bifidobacterium adolescentis (strain ATCC 15703 / DSM 20083 / NCTC 11814 / E194a).